The primary structure comprises 729 residues: 1,4-alpha-glucan branching enzyme GlgB (729 aa).

Catalysis depends on aspartate 405, which acts as the Nucleophile. Catalysis depends on glutamate 458, which acts as the Proton donor.

Belongs to the glycosyl hydrolase 13 family. GlgB subfamily. As to quaternary structure, monomer.

The catalysed reaction is Transfers a segment of a (1-&gt;4)-alpha-D-glucan chain to a primary hydroxy group in a similar glucan chain.. The protein operates within glycan biosynthesis; glycogen biosynthesis. Functionally, catalyzes the formation of the alpha-1,6-glucosidic linkages in glycogen by scission of a 1,4-alpha-linked oligosaccharide from growing alpha-1,4-glucan chains and the subsequent attachment of the oligosaccharide to the alpha-1,6 position. This chain is 1,4-alpha-glucan branching enzyme GlgB, found in Mannheimia succiniciproducens (strain KCTC 0769BP / MBEL55E).